Consider the following 301-residue polypeptide: Multifunctional dioxygenase ausE (301 aa).

Arg-72 and Gln-127 together coordinate substrate. Residues His-130 and Asp-132 each contribute to the Fe cation site. A substrate-binding site is contributed by Thr-167. Position 214 (His-214) interacts with Fe cation. Arg-226 contacts substrate.

The protein belongs to the PhyH family. Homodimer. Fe cation serves as cofactor.

It catalyses the reaction preaustinoid A1 + 2-oxoglutarate + O2 = preaustinoid A2 + succinate + CO2 + H2O. The enzyme catalyses preaustinoid A2 + 2-oxoglutarate + O2 = preaustinoid A3 + succinate + CO2 + H2O. The catalysed reaction is berkeleyone A + 2-oxoglutarate + O2 = preaustinoid A + succinate + CO2 + H2O. Its pathway is secondary metabolite biosynthesis; terpenoid biosynthesis. Its function is as follows. Multifunctional dioxygenase; part of the gene cluster A that mediates the biosynthesis of the fungal meroterpenoid acetoxydehydroaustin. The first step of the pathway is the synthesis of 3,5-dimethylorsellinic acid by the polyketide synthase ausA. 3,5-dimethylorsellinic acid is then prenylated by the polyprenyl transferase ausN. Further epoxidation by the FAD-dependent monooxygenase ausM and cyclization by the probable terpene cyclase ausL lead to the formation of protoaustinoid A. Protoaustinoid A is then oxidized to spiro-lactone preaustinoid A3 by the combined action of the FAD-binding monooxygenases ausB and ausC, and the dioxygenase ausE. Acid-catalyzed keto-rearrangement and ring contraction of the tetraketide portion of preaustinoid A3 by ausJ lead to the formation of preaustinoid A4. The aldo-keto reductase ausK, with the help of ausH, is involved in the next step by transforming preaustinoid A4 into isoaustinone which is in turn hydroxylated by the P450 monooxygenase ausI to form austinolide. The cytochrome P450 monooxygenase ausG then modifies austinolide to austinol. Austinol is further acetylated to austin by the O-acetyltransferase ausP, which spontaneously changes to dehydroaustin. The cytochrome P450 monooxygenase then converts dehydroaustin is into 7-dehydrodehydroaustin. The hydroxylation catalyzed by ausR permits the second O-acetyltransferase ausQ to add an additional acetyl group to the molecule, leading to the formation of acetoxydehydroaustin. Due to genetic rearrangements of the clusters and the subsequent loss of some enzymes, the end product of the Penicillium brasilianum austinoid biosynthesis clusters is acetoxydehydroaustin. The sequence is that of Multifunctional dioxygenase ausE from Penicillium brasilianum.